The sequence spans 85 residues: Probable Sec-independent protein translocase protein TatE (85 aa).

Residues 1 to 21 (MEGLSITKLLVVGILIVLLFG) traverse the membrane as a helical segment. The disordered stretch occupies residues 64 to 85 (KTVAETKAASDSQAAASVERKD).

Belongs to the TatA/E family. TatE subfamily.

It localises to the cell inner membrane. Functionally, part of the twin-arginine translocation (Tat) system that transports large folded proteins containing a characteristic twin-arginine motif in their signal peptide across membranes. TatE shares overlapping functions with TatA. This is Probable Sec-independent protein translocase protein TatE from Yersinia pestis.